A 426-amino-acid chain; its full sequence is Casein kinase I (426 aa).

The region spanning 9 to 278 (YRISRKIGGG…LRKLLREMFV (270 aa)) is the Protein kinase domain. ATP-binding positions include 15–23 (IGGGSFGEI) and Lys-38. Residue Asp-128 is the Proton acceptor of the active site. Disordered regions lie at residues 340–360 (TTTT…TVSN) and 377–426 (PSYN…PPAK). The segment covering 345 to 360 (SSSQPSNVKNISTVSN) has biased composition (polar residues). Residues 386–404 (QSPQQTTTTTSSSNPNQTT) are compositionally biased toward low complexity. Residues 414–426 (PQSSSTTTKPPAK) are compositionally biased toward polar residues.

The protein belongs to the protein kinase superfamily. CK1 Ser/Thr protein kinase family. Casein kinase I subfamily. Monomer. Post-translationally, autophosphorylated.

The protein localises to the cytoplasm. It is found in the nucleus. It carries out the reaction L-seryl-[protein] + ATP = O-phospho-L-seryl-[protein] + ADP + H(+). The catalysed reaction is L-threonyl-[protein] + ATP = O-phospho-L-threonyl-[protein] + ADP + H(+). Casein kinases are operationally defined by their preferential utilization of acidic proteins such as caseins as substrates. Can phosphorylate a large number of proteins. May have a role in DNA repair mechanism and support vegetative growth of the cells. This chain is Casein kinase I (cak1-1), found in Dictyostelium discoideum (Social amoeba).